The sequence spans 305 residues: Protoheme IX farnesyltransferase (305 aa).

9 consecutive transmembrane segments (helical) span residues 38–58 (FITT…SFLG), 60–80 (LDIV…SCAI), 110–130 (AYAF…MTTV), 131–151 (TSAV…TMWS), 161–181 (IGSV…TGTI), 185–205 (AWVL…SLAI), 227–247 (VTKR…FFLG), 249–269 (LGWP…VIGL), and 285–305 (FVYS…ITLF).

The protein belongs to the UbiA prenyltransferase family. Protoheme IX farnesyltransferase subfamily. As to quaternary structure, interacts with CtaA.

The protein localises to the cell membrane. The catalysed reaction is heme b + (2E,6E)-farnesyl diphosphate + H2O = Fe(II)-heme o + diphosphate. It functions in the pathway porphyrin-containing compound metabolism; heme O biosynthesis; heme O from protoheme: step 1/1. Its function is as follows. Converts heme B (protoheme IX) to heme O by substitution of the vinyl group on carbon 2 of heme B porphyrin ring with a hydroxyethyl farnesyl side group. The protein is Protoheme IX farnesyltransferase of Bacillus pumilus (strain SAFR-032).